The primary structure comprises 166 residues: MSEPTSRRPAYARLLDRAVRILAVRDHSEQELRRKLSAPVMGKNGPEEIDATADDYERVIAWCHEHHYLDDERFVMRFIASRSRKGYGPARIYQELNQKGISRESTEKAMRECEIDWSEMAHEQAVRKYGEPLPSNFSEKVKVQRFLLYRGYLMDDIQQIWRNFAD.

Belongs to the RecX family.

The protein resides in the cytoplasm. Its function is as follows. Modulates RecA activity. The sequence is that of Regulatory protein RecX from Salmonella paratyphi C (strain RKS4594).